A 458-amino-acid polypeptide reads, in one-letter code: Ribulose bisphosphate carboxylase (458 aa).

Residue asparagine 111 participates in substrate binding. Lysine 166 (proton acceptor) is an active-site residue. Lysine 168 contributes to the substrate binding site. Mg(2+) contacts are provided by lysine 191, aspartate 193, and glutamate 194. Lysine 191 bears the N6-carboxylysine mark. The active-site Proton acceptor is histidine 287. Arginine 288, histidine 321, and serine 368 together coordinate substrate.

Belongs to the RuBisCO large chain family. Type II subfamily. As to quaternary structure, homodimer. Mg(2+) is required as a cofactor.

It carries out the reaction 2 (2R)-3-phosphoglycerate + 2 H(+) = D-ribulose 1,5-bisphosphate + CO2 + H2O. It catalyses the reaction D-ribulose 1,5-bisphosphate + O2 = 2-phosphoglycolate + (2R)-3-phosphoglycerate + 2 H(+). Its function is as follows. RuBisCO catalyzes two reactions: the carboxylation of D-ribulose 1,5-bisphosphate, the primary event in carbon dioxide fixation, as well as the oxidative fragmentation of the pentose substrate. Both reactions occur simultaneously and in competition at the same active site. The sequence is that of Ribulose bisphosphate carboxylase (cbbM) from Rhodobacter capsulatus (strain ATCC BAA-309 / NBRC 16581 / SB1003).